The chain runs to 123 residues: Basic myotoxic phospholipase A2 PhTX-II (123 aa).

7 disulfide bridges follow: C26-C116, C28-C45, C44-C95, C50-C123, C51-C88, C58-C81, and C75-C86. Ca(2+) contacts are provided by Y27, G29, and G31. H48 is a catalytic residue. D49 provides a ligand contact to Ca(2+). D89 is an active-site residue.

Monomer. Ca(2+) is required as a cofactor. As to expression, expressed by the venom gland.

It is found in the secreted. It carries out the reaction a 1,2-diacyl-sn-glycero-3-phosphocholine + H2O = a 1-acyl-sn-glycero-3-phosphocholine + a fatty acid + H(+). Its activity is regulated as follows. P-bromophenacyl bromide (BPB) completely inhibits the catalytic and edematogenic activities. Enzymatic activity is also diminished by EDTA, heparin and crotapotins F2 and F3 from C.d.collilineatus. Inhibited by divalent cations different from calcium ions (cadmium, magnesium, manganese, zinc), since they act as competitive antagonists of this cofactor. In terms of biological role, snake venom phospholipase A2 (PLA2) that induces myotoxicity and local edema in mice. In addition, it causes neuromuscular blockade in avian neuromuscular preparations with a significant direct action on skeletal muscle function. Myotoxic action is exerted by both enzymatic and non-enzymatic mechanisms. PLA2 catalyzes the calcium-dependent hydrolysis of the 2-acyl groups in 3-sn-phosphoglycerides. This is Basic myotoxic phospholipase A2 PhTX-II from Bothrocophias hyoprora (Amazonian hognose viper).